The sequence spans 493 residues: MRNTMNLTNLLAPWLDCPELADITVQSLELDSRQVKQGDTFVAIVGHVVDGRQYIEKAIEQGANAVIAQSCQQYPPGLVRYQQNVVIVYLEKLDEKLSQLAGRLYQHPEMSLIGVTGTNGKTTITQLIAQWLELAGQKAAVMGTTGNGFLNALQPAANTTGNAVEIQKTLADLQQQGAKATALEVSSHGLVQGRVKALQFAAGVFTNLSRDHLDYHGTMEAYAKAKMTLFTEHQCQHAIINLDDEVGAQWFQELQQGVGVSLFPQDASVKALWASSVAYAESGITIEFDGCFGQGRLHAPLIGEFNATNLLLALATLLALGVDKQALLDSAASLRPVLGRMELFQVNSKAKVVVDYAHTPDALEKALQALRVHCTGHLWAIFGCGGDRDKGKRPMMAEIAERLADHVVLTDDNPRSEDPAMIVQDMLAGLTRGDSAVVEHDRFSALQYALDNAQADDIILLAGKGHEDYQVLKHQTVHYSDRESAQQLLGISS.

UDP-N-acetyl-alpha-D-muramoyl-L-alanyl-D-glutamate is bound by residues Leu-30 and Ser-32. ATP is bound at residue 117–123 (GTNGKTT). UDP-N-acetyl-alpha-D-muramoyl-L-alanyl-D-glutamate-binding positions include Asn-158, 159–160 (TT), Ser-186, Gln-192, and Arg-194. Lys-226 is modified (N6-carboxylysine). Meso-2,6-diaminopimelate-binding positions include Arg-388, 412–415 (DNPR), Gly-463, and Glu-467. Positions 412 to 415 (DNPR) match the Meso-diaminopimelate recognition motif motif.

Belongs to the MurCDEF family. MurE subfamily. Mg(2+) is required as a cofactor. Carboxylation is probably crucial for Mg(2+) binding and, consequently, for the gamma-phosphate positioning of ATP.

Its subcellular location is the cytoplasm. It carries out the reaction UDP-N-acetyl-alpha-D-muramoyl-L-alanyl-D-glutamate + meso-2,6-diaminopimelate + ATP = UDP-N-acetyl-alpha-D-muramoyl-L-alanyl-gamma-D-glutamyl-meso-2,6-diaminopimelate + ADP + phosphate + H(+). It participates in cell wall biogenesis; peptidoglycan biosynthesis. In terms of biological role, catalyzes the addition of meso-diaminopimelic acid to the nucleotide precursor UDP-N-acetylmuramoyl-L-alanyl-D-glutamate (UMAG) in the biosynthesis of bacterial cell-wall peptidoglycan. The protein is UDP-N-acetylmuramoyl-L-alanyl-D-glutamate--2,6-diaminopimelate ligase of Vibrio vulnificus (strain YJ016).